Reading from the N-terminus, the 492-residue chain is 2-succinylbenzoate--CoA ligase (492 aa).

The protein belongs to the ATP-dependent AMP-binding enzyme family. MenE subfamily.

It catalyses the reaction 2-succinylbenzoate + ATP + CoA = 2-succinylbenzoyl-CoA + AMP + diphosphate. It participates in quinol/quinone metabolism; 1,4-dihydroxy-2-naphthoate biosynthesis; 1,4-dihydroxy-2-naphthoate from chorismate: step 5/7. Its pathway is quinol/quinone metabolism; menaquinone biosynthesis. Its function is as follows. Converts 2-succinylbenzoate (OSB) to 2-succinylbenzoyl-CoA (OSB-CoA). In Staphylococcus aureus (strain MSSA476), this protein is 2-succinylbenzoate--CoA ligase.